The following is a 550-amino-acid chain: ATP synthase subunit alpha (550 aa).

Residue 172–179 coordinates ATP; that stretch reads GDRKTGKT. Positions 514 to 550 are disordered; that stretch reads EDEQRVNEPPAKPLAGEENRETVTRFRDGTTDRPAES. A compositionally biased stretch (basic and acidic residues) spans 528 to 550; that stretch reads AGEENRETVTRFRDGTTDRPAES.

The protein belongs to the ATPase alpha/beta chains family. F-type ATPases have 2 components, CF(1) - the catalytic core - and CF(0) - the membrane proton channel. CF(1) has five subunits: alpha(3), beta(3), gamma(1), delta(1), epsilon(1). CF(0) has three main subunits: a(1), b(2) and c(9-12). The alpha and beta chains form an alternating ring which encloses part of the gamma chain. CF(1) is attached to CF(0) by a central stalk formed by the gamma and epsilon chains, while a peripheral stalk is formed by the delta and b chains.

It is found in the cell membrane. It catalyses the reaction ATP + H2O + 4 H(+)(in) = ADP + phosphate + 5 H(+)(out). In terms of biological role, produces ATP from ADP in the presence of a proton gradient across the membrane. The alpha chain is a regulatory subunit. The chain is ATP synthase subunit alpha from Salinispora arenicola (strain CNS-205).